A 557-amino-acid chain; its full sequence is MSGSVSRDAEALKSADSSTRRSGGRITFPFMIVTLFGLTLATLGWLQNLIVYLIEEYNMKSIAAAKILNIFSGFTFMFPAIGAIAADSFFGTIPVILVSSFISLVGVVLLALTTLFDSLRPQACETASKLCQAPTNIQLGVLYTAITLGCVGAGGLRFTLATAGANQYEKTKDQGSFFNWFFFTWYLAASISATAIVYAEENISWSFGFGLCVAANLLGLIVFISGKKFYKHDKPLGSPFTSLLRVIFAAIRKRKAVVSTNEKDYHSESKKTPTKSFRFFNRAALKQDDEVNSDGTIHNQWRLCSVQQVEDFKAVIRIIPLVLAILFLSTPIAMQLGLTVLQGLVMDRRLGPHFKIPAGSLQVITLLSTCLFIIVNDRFLYPFYQKLTGKFPTPIQRVGIGHVFNILSMAVTAIVEAKRLKIVQKGHFLGSSSVADMSVLWLFPPLVIVGIGEAFHFPGNVALCYQEFPESMRSTATSITSVLIGICFYTSTALIDLIQKTTAWLPDDINHGRVDNVYWILVIGGVLNLGYFLVCSWFYKYRNLENADHEQDANVSH.

The next 12 helical transmembrane spans lie at 26-46 (ITFP…LGWL), 67-87 (ILNI…IAAD), 89-109 (FFGT…GVVL), 136-156 (NIQL…AGGL), 177-197 (FFNW…TAIV), 203-223 (ISWS…LIVF), 318-338 (IIPL…QLGL), 356-376 (IPAG…IIVN), 398-418 (VGIG…VEAK), 439-459 (VLWL…HFPG), 478-498 (SITS…IDLI), and 518-538 (YWIL…CSWF).

This sequence belongs to the major facilitator superfamily. Proton-dependent oligopeptide transporter (POT/PTR) (TC 2.A.17) family. As to expression, expressed in roots.

It is found in the membrane. Transporter involved in a passive nitrate efflux. The chain is Protein NRT1/ PTR FAMILY 2.6 (NPF2.6) from Arabidopsis thaliana (Mouse-ear cress).